The sequence spans 538 residues: Chaperonin GroEL (538 aa).

Residues 29 to 32 (TLGP), 86 to 90 (DGTTT), Gly-413, 479 to 481 (DAL), and Asp-495 contribute to the ATP site.

The protein belongs to the chaperonin (HSP60) family. As to quaternary structure, forms a cylinder of 14 subunits composed of two heptameric rings stacked back-to-back. Interacts with the co-chaperonin GroES.

The protein localises to the cytoplasm. It carries out the reaction ATP + H2O + a folded polypeptide = ADP + phosphate + an unfolded polypeptide.. Functionally, together with its co-chaperonin GroES, plays an essential role in assisting protein folding. The GroEL-GroES system forms a nano-cage that allows encapsulation of the non-native substrate proteins and provides a physical environment optimized to promote and accelerate protein folding. The sequence is that of Chaperonin GroEL from Fervidobacterium nodosum (strain ATCC 35602 / DSM 5306 / Rt17-B1).